Reading from the N-terminus, the 864-residue chain is Paramyosin (864 aa).

The nonhelical region stretch occupies residues 1-30 (MSSLYRDLDSDVSSTRIVRHSYNVYRGSSP). Residues 31–853 (SSQNRLESRI…QTVRRSRSMS (823 aa)) adopt a coiled-coil conformation. The tract at residues 854–864 (VSREVTRVVRV) is nonhelical region.

Belongs to the paramyosin family. Homodimer. Phosphorylated. Most abundantly expressed in muscle tissues from byssus retractor and adductor muscles. Low expression in foot, gill, inner mantle and outer mantle.

It is found in the cytoplasm. It localises to the myofibril. Paramyosin is a major structural component of many thick filaments isolated from invertebrate muscles. This Mytilus galloprovincialis (Mediterranean mussel) protein is Paramyosin.